Consider the following 123-residue polypeptide: Fluoride-specific ion channel FluC (123 aa).

The next 4 membrane-spanning stretches (helical) occupy residues 3–23 (IAWV…LSNA), 34–54 (WGTL…FYLF), 67–87 (LVLV…LETL), and 99–119 (LLNM…GLVV). 2 residues coordinate Na(+): G74 and T77.

Belongs to the fluoride channel Fluc/FEX (TC 1.A.43) family.

It is found in the cell inner membrane. The catalysed reaction is fluoride(in) = fluoride(out). Na(+) is not transported, but it plays an essential structural role and its presence is essential for fluoride channel function. In terms of biological role, fluoride-specific ion channel. Important for reducing fluoride concentration in the cell, thus reducing its toxicity. The polypeptide is Fluoride-specific ion channel FluC (Magnetococcus marinus (strain ATCC BAA-1437 / JCM 17883 / MC-1)).